The primary structure comprises 84 residues: uncharacterized protein (84 aa).

Residues Ala34–Ala54 are compositionally biased toward low complexity. The disordered stretch occupies residues Ala34–Met57. Residue Asn45 is glycosylated (N-linked (GlcNAc...) asparagine). Residues Tyr66–Gly83 form a helical membrane-spanning segment.

It localises to the endoplasmic reticulum membrane. This is an uncharacterized protein from Saccharomyces cerevisiae (strain ATCC 204508 / S288c) (Baker's yeast).